The chain runs to 632 residues: MCGFVGVFNKHPLAQTADQEELIKQMNQMIVHRGPDSDGYFHDEHVGFGFRRLSIIDVENGGQPLSYEDETYWIIFNGEIYNYIELREELEAKGYTFNTDSDTEVLLATYRHYKEEAASKLRGMFAFLIWNKNDHVLYGARDPFGIKPLYYTTINDQVYFASERKSLMVAQNDIEIDKEALQQYMSFQFVPEPSTLDAHVKKVEPGSQFTIRPDGDITFKTYFKANFKPVQTEEDKLVKEVRDAIYDSVNVHMRSDVPVGSFLSGGIDSSFIVSVAKEFHPSLKTFSVGFEQQGFSEVDVAKETAAALGIENISKVISPEEYMNELPKIVWHFDDPLADPAAIPLYFVAKEAKKHVTVALSGEGADELFGGYNIYREPLSLKPFERIPSGLKKMLLHVAAVMPEGMRGKSLLERGCTPLQDRYIGNAKIFEESVKKQLLKHYNPNLSYRDVTKTYFTESSSYSDINKMQYVDIHTWMRGDILLKADKMTMANSLELRVPFLDKVVFDVASKIPDELKTKNGTTKYLLRKAAEGIVPEHVLNRKKLGFPVPIRHWLKNEMNEWVRNIIQESQTDAYIHKDYVLQLLEDHCADKADNSRKIWTVLIFMIWHSINIEKRYMPEELSHQPKEVIFV.

Cysteine 2 serves as the catalytic For GATase activity. Positions cysteine 2 to aspartate 214 constitute a Glutamine amidotransferase type-2 domain. Residues arginine 52 to isoleucine 56, asparagine 77 to glutamate 79, and aspartate 102 each bind L-glutamine. Residues valine 288 and serine 361 to glycine 362 contribute to the ATP site.

The protein belongs to the asparagine synthetase family.

The catalysed reaction is L-aspartate + L-glutamine + ATP + H2O = L-asparagine + L-glutamate + AMP + diphosphate + H(+). Its pathway is amino-acid biosynthesis; L-asparagine biosynthesis; L-asparagine from L-aspartate (L-Gln route): step 1/1. Its function is as follows. Main asparagine synthetase in vegetative cells. The chain is Asparagine synthetase [glutamine-hydrolyzing] 1 (asnB) from Bacillus subtilis (strain 168).